We begin with the raw amino-acid sequence, 321 residues long: Methionine import ATP-binding protein MetN (321 aa).

In terms of domain architecture, ABC transporter spans 2–241 (INAVDLHKVY…PGSLLARSLF (240 aa)). Position 38–45 (38–45 (GPSGAGKS)) interacts with ATP.

Belongs to the ABC transporter superfamily. Methionine importer (TC 3.A.1.24) family. As to quaternary structure, the complex is composed of two ATP-binding proteins (MetN), two transmembrane proteins (MetI) and a solute-binding protein (MetQ).

The protein localises to the cell membrane. The catalysed reaction is L-methionine(out) + ATP + H2O = L-methionine(in) + ADP + phosphate + H(+). It carries out the reaction D-methionine(out) + ATP + H2O = D-methionine(in) + ADP + phosphate + H(+). Functionally, part of the ABC transporter complex MetNIQ involved in methionine import. Responsible for energy coupling to the transport system. The protein is Methionine import ATP-binding protein MetN of Thermobifida fusca (strain YX).